Reading from the N-terminus, the 510-residue chain is Beta-glucosidase 12 (510 aa).

The signal sequence occupies residues 1 to 24 (MAAAGAMPGGLLLTFLLLAVVASG). Residue Q53 participates in a beta-D-glucoside binding. N122 carries an N-linked (GlcNAc...) asparagine glycan. A beta-D-glucoside contacts are provided by residues H157 and 202-203 (NE). E203 serves as the catalytic Proton donor. Cystine bridges form between C208–C243 and C222–C230. N229 carries an N-linked (GlcNAc...) asparagine glycan. Y346 contacts a beta-D-glucoside. N-linked (GlcNAc...) asparagine glycans are attached at residues N361 and N371. Position 417 (E417) interacts with a beta-D-glucoside. E417 functions as the Nucleophile in the catalytic mechanism. N425 carries an N-linked (GlcNAc...) asparagine glycan. A beta-D-glucoside-binding positions include W466, 473 to 474 (EW), and F482.

The protein belongs to the glycosyl hydrolase 1 family.

The protein resides in the secreted. It carries out the reaction Hydrolysis of terminal, non-reducing beta-D-glucosyl residues with release of beta-D-glucose.. Functionally, hydrolyzes p-nitrophenyl beta-D-glucoside, p-nitrophenyl beta-D-galactoside, p-nitrophenyl beta-D-xyloside, p-nitrophenyl beta-D-fucoside, p-nitrophenyl beta-L-arabinoside, cello-oligosaccharides and laminaribiose. The polypeptide is Beta-glucosidase 12 (Oryza sativa subsp. japonica (Rice)).